We begin with the raw amino-acid sequence, 265 residues long: Phosphonates import ATP-binding protein PhnC 1 (265 aa).

The ABC transporter domain occupies 7–252 (IEVSNLSKSF…KLNEIYGTAA (246 aa)). Residue 39-46 (GASGSGKS) participates in ATP binding.

It belongs to the ABC transporter superfamily. Phosphonates importer (TC 3.A.1.9.1) family. In terms of assembly, the complex is composed of two ATP-binding proteins (PhnC), two transmembrane proteins (PhnE) and a solute-binding protein (PhnD).

It localises to the cell inner membrane. The enzyme catalyses phosphonate(out) + ATP + H2O = phosphonate(in) + ADP + phosphate + H(+). Part of the ABC transporter complex PhnCDE involved in phosphonates import. Responsible for energy coupling to the transport system. This chain is Phosphonates import ATP-binding protein PhnC 1, found in Nostoc sp. (strain PCC 7120 / SAG 25.82 / UTEX 2576).